Consider the following 451-residue polypeptide: AP-3 complex subunit mu (451 aa).

Residues Asn-191 to Arg-450 form the MHD domain.

The protein belongs to the adaptor complexes medium subunit family. Adaptor protein complex 3 (AP-3) is a heterotetramer composed of 2 large adaptins (APL5 and APL6), a medium adaptin (APM3) and a small adaptin (APS3).

It is found in the golgi apparatus. It localises to the cytoplasmic vesicle membrane. Part of the AP-3 complex, an adaptor-related complex which is not clathrin-associated. The complex is associated with the Golgi region as well as more peripheral structures. It facilitates the budding of vesicles from the Golgi membrane and may be directly involved in trafficking to the vacuole. The sequence is that of AP-3 complex subunit mu (APM3) from Eremothecium gossypii (strain ATCC 10895 / CBS 109.51 / FGSC 9923 / NRRL Y-1056) (Yeast).